A 161-amino-acid polypeptide reads, in one-letter code: Tropomyosin-2 (161 aa).

Residues Met-1–Leu-161 adopt a coiled-coil conformation. Over residues Leu-32 to Ile-43 the composition is skewed to basic and acidic residues. Residues Leu-32 to Asp-97 are disordered. Ser-55 carries the phosphoserine modification. Residues Ser-62–Asn-83 show a composition bias toward polar residues. 2 positions are modified to phosphoserine: Ser-116 and Ser-157.

As to quaternary structure, homodimer.

It is found in the cytoplasm. Its subcellular location is the cytoskeleton. Involved in cell morphogenesis. Binds to F-actin and stabilizes the actin filaments. The polypeptide is Tropomyosin-2 (TPM2) (Saccharomyces cerevisiae (strain ATCC 204508 / S288c) (Baker's yeast)).